The sequence spans 592 residues: A-type ATP synthase subunit A (592 aa).

Position 236 to 243 (236 to 243 (GPFGSGKT)) interacts with ATP.

Belongs to the ATPase alpha/beta chains family. As to quaternary structure, has multiple subunits with at least A(3), B(3), C, D, E, F, H, I and proteolipid K(x).

Its subcellular location is the cell membrane. It carries out the reaction ATP + H2O + 4 H(+)(in) = ADP + phosphate + 5 H(+)(out). Its function is as follows. Component of the A-type ATP synthase that produces ATP from ADP in the presence of a proton gradient across the membrane. The A chain is the catalytic subunit. This is A-type ATP synthase subunit A from Methanopyrus kandleri (strain AV19 / DSM 6324 / JCM 9639 / NBRC 100938).